The primary structure comprises 700 residues: Elongation factor G (700 aa).

Positions 10 to 286 (TKVRNIGIMA…AVIDYLPNPL (277 aa)) constitute a tr-type G domain. GTP-binding positions include 19–26 (AHIDAGKT), 83–87 (DTPGH), and 137–140 (NKMD).

Belongs to the TRAFAC class translation factor GTPase superfamily. Classic translation factor GTPase family. EF-G/EF-2 subfamily.

The protein resides in the cytoplasm. Functionally, catalyzes the GTP-dependent ribosomal translocation step during translation elongation. During this step, the ribosome changes from the pre-translocational (PRE) to the post-translocational (POST) state as the newly formed A-site-bound peptidyl-tRNA and P-site-bound deacylated tRNA move to the P and E sites, respectively. Catalyzes the coordinated movement of the two tRNA molecules, the mRNA and conformational changes in the ribosome. The sequence is that of Elongation factor G from Mycolicibacterium vanbaalenii (strain DSM 7251 / JCM 13017 / BCRC 16820 / KCTC 9966 / NRRL B-24157 / PYR-1) (Mycobacterium vanbaalenii).